Here is a 357-residue protein sequence, read N- to C-terminus: Sorbitol dehydrogenase 1 (357 aa).

C43 provides a ligand contact to Zn(2+). Y49 serves as a coordination point for substrate. H68 and E69 together coordinate Zn(2+). E154 contributes to the substrate binding site. Residues D202, K207, 275-277 (VGM), and 299-301 (CFR) contribute to the NAD(+) site. 2 residues coordinate substrate: R301 and Y302.

This sequence belongs to the zinc-containing alcohol dehydrogenase family. As to quaternary structure, homotetramer. Zn(2+) serves as cofactor.

The enzyme catalyses keto-D-fructose + NADH + H(+) = D-sorbitol + NAD(+). The catalysed reaction is xylitol + NAD(+) = D-xylulose + NADH + H(+). Its function is as follows. Polyol dehydrogenase that catalyzes the reversible NAD(+)-dependent oxidation of various sugar alcohols. Is active with D-sorbitol (D-glucitol) and xylitol as substrates, leading to the C2-oxidized product D-fructose and D-xylulose, respectively. Is likely involved in the utilization of D-sorbitol as a sole carbon source for growth. Has no activity on mannitol and primary alcohols such as ethanol. This chain is Sorbitol dehydrogenase 1 (SOR1), found in Saccharomyces cerevisiae (strain ATCC 204508 / S288c) (Baker's yeast).